We begin with the raw amino-acid sequence, 160 residues long: Twist-related protein 2 (160 aa).

The tract at residues 1–63 (MEEGSSSPVS…GSPSAQSFEE (63 aa)) is disordered. Residues 27-37 (KRFGRKRRYSK) show a composition bias toward basic residues. The bHLH domain maps to 66–117 (SQRILANVRERQRTQSLNEAFAALRKIIPTLPSDKLSKIQTLKLAARYIDFL).

Efficient DNA binding requires dimerization with another bHLH protein. Forms a heterodimer with TCF3/E12. Also interacts with MEF2C. In terms of tissue distribution, expressed at low levels in sclerotome and dermatome of somites, and in limb buds at 10.5 dpc. Accumulates predominantly in dermatome, prevertebrae and derivatives of branchial arches by 13 dpc. Also expressed near surface of embryo and in chondrogenic cells. In adult, expressed at low levels in skin, bladder, uterus, aorta and heart.

The protein resides in the nucleus. The protein localises to the cytoplasm. In terms of biological role, binds to the E-box consensus sequence 5'-CANNTG-3' as a heterodimer and inhibits transcriptional activation by MYOD1, MYOG, MEF2A and MEF2C. Also represses expression of pro-inflammatory cytokines such as TNFA and IL1B. Involved in postnatal glycogen storage and energy metabolism. Inhibits the premature or ectopic differentiation of preosteoblast cells during osteogenesis, possibly by changing the internal signal transduction response of osteoblasts to external growth factors. This chain is Twist-related protein 2 (Twist2), found in Mus musculus (Mouse).